Reading from the N-terminus, the 302-residue chain is UDP-N-acetylenolpyruvoylglucosamine reductase (302 aa).

One can recognise an FAD-binding PCMH-type domain in the interval 27–192; it reads KTGGPADYVA…VSVTFGLKPG (166 aa). Residue Arg171 is part of the active site. Ser221 acts as the Proton donor in catalysis. Glu291 is a catalytic residue.

This sequence belongs to the MurB family. FAD is required as a cofactor.

It is found in the cytoplasm. It carries out the reaction UDP-N-acetyl-alpha-D-muramate + NADP(+) = UDP-N-acetyl-3-O-(1-carboxyvinyl)-alpha-D-glucosamine + NADPH + H(+). The protein operates within cell wall biogenesis; peptidoglycan biosynthesis. In terms of biological role, cell wall formation. The chain is UDP-N-acetylenolpyruvoylglucosamine reductase from Lactiplantibacillus plantarum (strain ATCC BAA-793 / NCIMB 8826 / WCFS1) (Lactobacillus plantarum).